Consider the following 179-residue polypeptide: uncharacterized protein (179 aa).

4 consecutive transmembrane segments (helical) span residues His-33–Asp-53, Val-63–Leu-83, Ile-89–Thr-109, and Phe-115–Phe-135.

It is found in the cell membrane. This is an uncharacterized protein from Bacillus subtilis (strain 168).